The chain runs to 354 residues: Thiamine thiazole synthase 2, chloroplastic (354 aa).

The transit peptide at Met1 to Arg44 directs the protein to the chloroplast. A disordered region spans residues Ser17–Ser49. Positions Pro20–Ala32 are enriched in polar residues. Substrate is bound by residues Ala97, Glu117–Gln118, Gly125, and Val190. Cys219 is modified (2,3-didehydroalanine (Cys)). Substrate contacts are provided by residues Asp221, His236, Met288, and Arg298–Gly300.

This sequence belongs to the THI4 family. In terms of assembly, homooctamer. Requires Fe cation as cofactor. In terms of processing, during the catalytic reaction, a sulfide is transferred from Cys-219 to a reaction intermediate, generating a dehydroalanine residue. In terms of tissue distribution, highest expression in developing embryos and green leaves and a very low level expression seen in endosperm, roots, etiolated shoots and immature ears.

It localises to the plastid. It is found in the chloroplast. The catalysed reaction is [ADP-thiazole synthase]-L-cysteine + glycine + NAD(+) = [ADP-thiazole synthase]-dehydroalanine + ADP-5-ethyl-4-methylthiazole-2-carboxylate + nicotinamide + 3 H2O + 2 H(+). Functionally, involved in biosynthesis of the thiamine precursor thiazole. Catalyzes the conversion of NAD and glycine to adenosine diphosphate 5-(2-hydroxyethyl)-4-methylthiazole-2-carboxylic acid (ADT), an adenylated thiazole intermediate. The reaction includes an iron-dependent sulfide transfer from a conserved cysteine residue of the protein to a thiazole intermediate. The enzyme can only undergo a single turnover, which suggests it is a suicide enzyme. May have additional roles in adaptation to various stress conditions and in DNA damage tolerance. The chain is Thiamine thiazole synthase 2, chloroplastic from Zea mays (Maize).